We begin with the raw amino-acid sequence, 279 residues long: Tryptophan 2,3-dioxygenase (279 aa).

Residues 48–52 (FIIQH), Tyr110, and Arg114 contribute to the substrate site. Residue His237 coordinates heme. Thr251 contributes to the substrate binding site.

It belongs to the tryptophan 2,3-dioxygenase family. As to quaternary structure, homotetramer. Requires heme as cofactor.

It carries out the reaction L-tryptophan + O2 = N-formyl-L-kynurenine. The protein operates within amino-acid degradation; L-tryptophan degradation via kynurenine pathway; L-kynurenine from L-tryptophan: step 1/2. Heme-dependent dioxygenase that catalyzes the oxidative cleavage of the L-tryptophan (L-Trp) pyrrole ring and converts L-tryptophan to N-formyl-L-kynurenine. Catalyzes the oxidative cleavage of the indole moiety. The sequence is that of Tryptophan 2,3-dioxygenase from Bradyrhizobium sp. (strain BTAi1 / ATCC BAA-1182).